The chain runs to 185 residues: Tetratricopeptide repeat protein 36 homolog (185 aa).

TPR repeat units follow at residues 53–86, 88–119, and 125–158; these read SRELELQGVLLTEKGSFDEALKVFQLALNQAQRA, VLNNRAQTLRLAKRDGEALDDLNKALEMASDQ, and CHAHCQRGVLYRKLDNLDAARSDFEAAAQLGSKF.

Belongs to the TTC36 family.

The chain is Tetratricopeptide repeat protein 36 homolog from Drosophila pseudoobscura pseudoobscura (Fruit fly).